A 234-amino-acid polypeptide reads, in one-letter code: Ribitol-5-phosphate cytidylyltransferase (234 aa).

Residues 7–10 (LAGG) and 79–85 (GSIVQKS) each bind CTP.

The protein belongs to the IspD/TarI cytidylyltransferase family. TarI subfamily.

The enzyme catalyses D-ribitol 5-phosphate + CTP + H(+) = CDP-L-ribitol + diphosphate. It functions in the pathway cell wall biogenesis; poly(ribitol phosphate) teichoic acid biosynthesis. In terms of biological role, catalyzes the transfer of the cytidylyl group of CTP to D-ribitol 5-phosphate. The polypeptide is Ribitol-5-phosphate cytidylyltransferase (Lacticaseibacillus paracasei (strain ATCC 334 / BCRC 17002 / CCUG 31169 / CIP 107868 / KCTC 3260 / NRRL B-441) (Lactobacillus paracasei)).